The sequence spans 49 residues: Osteocalcin (49 aa).

The 47-residue stretch at 1–47 (YLDHWLGAPAPYPDPLEPRREVCELNPDCDELADHIGFQEAYRRFYG) folds into the Gla domain. Pro-9 is subject to Hydroxyproline. 4 residues coordinate Ca(2+): Glu-17, Glu-21, Glu-24, and Asp-30. 3 positions are modified to 4-carboxyglutamate: Glu-17, Glu-21, and Glu-24. Cys-23 and Cys-29 are joined by a disulfide.

Belongs to the osteocalcin/matrix Gla protein family. Gamma-carboxyglutamate residues are formed by vitamin K dependent carboxylation by GGCX. These residues are essential for the binding of calcium. Decarboxylation promotes the hormone activity.

The protein resides in the secreted. In terms of biological role, the carboxylated form is one of the main organic components of the bone matrix, which constitutes 1-2% of the total bone protein. It acts as a negative regulator of bone formation and is required to limit bone formation without impairing bone resorption or mineralization. The carboxylated form binds strongly to apatite and calcium. Functionally, the uncarboxylated form acts as a hormone secreted by osteoblasts, which regulates different cellular processes, such as energy metabolism, male fertility and brain development. Regulates of energy metabolism by acting as a hormone favoring pancreatic beta-cell proliferation, insulin secretion and sensitivity and energy expenditure. Uncarboxylated osteocalcin hormone also promotes testosterone production in the testes: acts as a ligand for G protein-coupled receptor GPRC6A at the surface of Leydig cells, initiating a signaling response that promotes the expression of enzymes required for testosterone synthesis in a CREB-dependent manner. Also acts as a regulator of brain development: osteocalcin hormone crosses the blood-brain barrier and acts as a ligand for GPR158 on neurons, initiating a signaling response that prevents neuronal apoptosis in the hippocampus, favors the synthesis of all monoamine neurotransmitters and inhibits that of gamma-aminobutyric acid (GABA). Osteocalcin also crosses the placenta during pregnancy and maternal osteocalcin is required for fetal brain development. In Equus caballus (Horse), this protein is Osteocalcin (BGLAP).